The chain runs to 237 residues: Ribonuclease PH (237 aa).

Phosphate-binding positions include Arg86 and 124 to 126 (GTR).

Belongs to the RNase PH family. In terms of assembly, homohexameric ring arranged as a trimer of dimers.

The catalysed reaction is tRNA(n+1) + phosphate = tRNA(n) + a ribonucleoside 5'-diphosphate. Its function is as follows. Phosphorolytic 3'-5' exoribonuclease that plays an important role in tRNA 3'-end maturation. Removes nucleotide residues following the 3'-CCA terminus of tRNAs; can also add nucleotides to the ends of RNA molecules by using nucleoside diphosphates as substrates, but this may not be physiologically important. Probably plays a role in initiation of 16S rRNA degradation (leading to ribosome degradation) during starvation. This Coxiella burnetii (strain RSA 331 / Henzerling II) protein is Ribonuclease PH.